The chain runs to 253 residues: Polyhedrin (253 aa).

Its function is as follows. Major component of the virus occlusion bodies, which are large proteinaceous structures (polyhedra), that protect the virus from the outside environment for extended periods until they are ingested by insect larvae. The polypeptide is Polyhedrin (Orgyia pseudotsugata cypovirus (OpCPV)).